Reading from the N-terminus, the 301-residue chain is Thioredoxin-related transmembrane protein 2-A (301 aa).

An N-terminal signal peptide occupies residues 1 to 19; sequence MSLIRGLISTIYYLPKIYK. The Extracellular portion of the chain corresponds to 20 to 111; that stretch reads WFYRPYYFLS…VVLFFRVDLR (92 aa). The chain crosses the membrane as a helical span at residues 112–132; sequence FGLLYLTLCVVFLITCKPPAY. Residues 122 to 269 enclose the Thioredoxin domain; that stretch reads VFLITCKPPA…IFQKYKKFSK (148 aa). Residues 133–301 are Cytoplasmic-facing; it reads MGPENIKYFR…EEDSESKKDK (169 aa). A disordered region spans residues 268–301; the sequence is SKGEKPEEPQPVLEEESESPLEEEEEDSESKKDK. The span at 280–295 shows a compositional bias: acidic residues; that stretch reads LEEESESPLEEEEEDS. A Di-lysine motif motif is present at residues 298–301; sequence KKDK.

Monomer. Homodimer; disulfide-linked. Occurs in both reduced and oxidized monomeric form. Oxidative conditions increase homodimerization.

It is found in the endoplasmic reticulum membrane. The protein localises to the mitochondrion membrane. Endoplasmic reticulum and mitochondria-associated protein that probably functions as a regulator of cellular redox state and thereby regulates protein post-translational modification, protein folding and mitochondrial activity. The chain is Thioredoxin-related transmembrane protein 2-A from Danio rerio (Zebrafish).